Here is a 362-residue protein sequence, read N- to C-terminus: Spermidine/putrescine import ATP-binding protein PotA (362 aa).

One can recognise an ABC transporter domain in the interval 6 to 237 (ISFKHVVKSY…PINHYVADFI (232 aa)). 39–46 (GPSGCGKT) is a binding site for ATP.

It belongs to the ABC transporter superfamily. Spermidine/putrescine importer (TC 3.A.1.11.1) family. The complex is composed of two ATP-binding proteins (PotA), two transmembrane proteins (PotB and PotC) and a solute-binding protein (PotD).

It localises to the cell membrane. The enzyme catalyses ATP + H2O + polyamine-[polyamine-binding protein]Side 1 = ADP + phosphate + polyamineSide 2 + [polyamine-binding protein]Side 1.. Part of the ABC transporter complex PotABCD involved in spermidine/putrescine import. Responsible for energy coupling to the transport system. The sequence is that of Spermidine/putrescine import ATP-binding protein PotA from Ligilactobacillus salivarius (strain UCC118) (Lactobacillus salivarius).